The sequence spans 700 residues: Translation initiation factor IF-2 (700 aa).

Residues 58 to 85 (KKEVKKQKEPSKEKGKSSEQVKVKEKSK) form a disordered region. Residues 191–365 (PRPPVVTIMG…EMQEIRCIPD (175 aa)) form the tr-type G domain. A G1 region spans residues 200-207 (GHVDHGKT). 200–207 (GHVDHGKT) provides a ligand contact to GTP. The segment at 225–229 (GITQS) is G2. The G3 stretch occupies residues 246–249 (DTPG). GTP-binding positions include 246-250 (DTPGH) and 300-303 (NKID). A G4 region spans residues 300–303 (NKID). The tract at residues 337-339 (SAK) is G5.

Belongs to the TRAFAC class translation factor GTPase superfamily. Classic translation factor GTPase family. IF-2 subfamily.

It localises to the cytoplasm. Its function is as follows. One of the essential components for the initiation of protein synthesis. Protects formylmethionyl-tRNA from spontaneous hydrolysis and promotes its binding to the 30S ribosomal subunits. Also involved in the hydrolysis of GTP during the formation of the 70S ribosomal complex. The polypeptide is Translation initiation factor IF-2 (Petrotoga mobilis (strain DSM 10674 / SJ95)).